The sequence spans 199 residues: Holliday junction resolvase RecU (199 aa).

4 residues coordinate Mg(2+): threonine 82, aspartate 84, glutamate 97, and glutamine 116.

This sequence belongs to the RecU family. The cofactor is Mg(2+).

Its subcellular location is the cytoplasm. It carries out the reaction Endonucleolytic cleavage at a junction such as a reciprocal single-stranded crossover between two homologous DNA duplexes (Holliday junction).. Endonuclease that resolves Holliday junction intermediates in genetic recombination. Cleaves mobile four-strand junctions by introducing symmetrical nicks in paired strands. Promotes annealing of linear ssDNA with homologous dsDNA. Required for DNA repair, homologous recombination and chromosome segregation. In Streptococcus agalactiae serotype Ia (strain ATCC 27591 / A909 / CDC SS700), this protein is Holliday junction resolvase RecU.